Reading from the N-terminus, the 317-residue chain is Trem-like transcript 1 protein (317 aa).

A signal peptide spans 1–20 (MDCYLLLLLLLLGLAGQGSA). The 102-residue stretch at 21 to 122 (DSHPEVLQAP…PQTLHRVSLL (102 aa)) folds into the Ig-like V-type domain. Over 21–175 (DSHPEVLQAP…EFRRRENSIP (155 aa)) the chain is Extracellular. 2 cysteine pairs are disulfide-bonded: Cys39–Cys105 and Cys53–Cys60. Residues 147–166 (TGSLLEDPSLDPSASAGPHE) form a disordered region. A helical transmembrane segment spans residues 176 to 196 (LIWGAVLLLALVVVAVVIFAV). At 197 to 317 (MARKKGNRLV…PPNSQTPPSK (121 aa)) the chain is on the cytoplasmic side. A lipid anchor (S-palmitoyl cysteine) is attached at Cys208. A disordered region spans residues 212–278 (QSTGVPGMDP…SQPPLPPKVL (67 aa)). Residues 261 to 275 (SSEPPAPPSQPPLPP) show a composition bias toward pro residues. Ser283 is subject to Phosphoserine. Residues 284–289 (VTYATV) carry the ITIM motif. Residues 295 to 317 (DKGKIASCEPVQDPPNSQTPPSK) form a disordered region. Residues 308 to 317 (PPNSQTPPSK) are compositionally biased toward polar residues.

In terms of assembly, when phosphorylated, interacts with PTPN11. When phosphorylated, interacts with PTPN6. Phosphorylated on tyrosine residues. Highly expressed in bone marrow leukocytes, splenic megakaryocytes and platelets. Detected in brain, liver and in peritoneal monocytes.

The protein localises to the cell membrane. It is found in the cytoplasm. In terms of biological role, cell surface receptor that may play a role in the innate and adaptive immune response. The protein is Trem-like transcript 1 protein (Treml1) of Mus musculus (Mouse).